A 610-amino-acid polypeptide reads, in one-letter code: Glutamine--fructose-6-phosphate aminotransferase [isomerizing] (610 aa).

Cysteine 2 serves as the catalytic Nucleophile; for GATase activity. The 217-residue stretch at 2-218 (CGIVGAVAQR…EGDVAEMTRR (217 aa)) folds into the Glutamine amidotransferase type-2 domain. 2 consecutive SIS domains span residues 286–426 (AAEI…QQQR) and 459–600 (LAED…VDQP). Lysine 605 serves as the catalytic For Fru-6P isomerization activity.

Homodimer.

Its subcellular location is the cytoplasm. The enzyme catalyses D-fructose 6-phosphate + L-glutamine = D-glucosamine 6-phosphate + L-glutamate. In terms of biological role, catalyzes the first step in hexosamine metabolism, converting fructose-6P into glucosamine-6P using glutamine as a nitrogen source. This chain is Glutamine--fructose-6-phosphate aminotransferase [isomerizing], found in Vibrio cholerae serotype O1 (strain ATCC 39315 / El Tor Inaba N16961).